Here is a 599-residue protein sequence, read N- to C-terminus: MSAASANSVTNPSAWENSEIHPKHSYSPIVSGDLEVPETEIQLDDSPTGPNDPVRIYRTRGPECDPTVGLKPLRAQWIDSREDTEEYAGRERNLADDGRSAQRRGAASLEWKGVKPTPRRAKQGKRVTQMHYARQGIITKEMEFVALREHMDPEFVRSEIARGRAIIPNNINHPESEPMIIGRKFLTKINANIGNSAVTSSIEEEVSKLRWATRWGADTVMDLSTGDDIHTTREWIIRNSPVPIGTVPIYQALEKVNGVAEDLTWEIFRDTVIEQCEQGVDYMTIHAGVLLAYIPLTTKRITGIVSRGGSIMAGWCLAHHKESFLYEHFDELCEIFAQYDVAFSLGDGLRPGSVADANDAAQFAELKTIGELARRAWEYDVQVMIEGPGHVPLNMVQENNELEQKWAHDAPFYTLGPLVTDIAPGYDHITSAIGAAHIAMGGTAMLCYVTPKEHLGLPNRDDVKTGVITYKLAAHAADVAKGHPGARAWDDAMSKARFEFRWHDQFALSLDPDTAIAYHDETLPAEPAKTAHFCSMCGPKFCSMRISQDIRDMFADKIADLGIPQVGGDAEAGMAAKSEEFVAQGSQLYSEVRDNAAHA.

The segment covering 1 to 16 has biased composition (polar residues); sequence MSAASANSVTNPSAWE. Disordered regions lie at residues 1–53 and 82–108; these read MSAA…PNDP and EDTEEYAGRERNLADDGRSAQRRGAAS. The span at 87-100 shows a compositional bias: basic and acidic residues; that stretch reads YAGRERNLADDGRS. Substrate contacts are provided by residues N192, M221, Y250, H286, 306–308, 347–350, and E386; these read SRG and DGLR. H390 is a Zn(2+) binding site. Position 413 (Y413) interacts with substrate. Zn(2+) is bound at residue H454. [4Fe-4S] cluster is bound by residues C534, C537, and C542.

This sequence belongs to the ThiC family. Requires [4Fe-4S] cluster as cofactor.

The enzyme catalyses 5-amino-1-(5-phospho-beta-D-ribosyl)imidazole + S-adenosyl-L-methionine = 4-amino-2-methyl-5-(phosphooxymethyl)pyrimidine + CO + 5'-deoxyadenosine + formate + L-methionine + 3 H(+). The protein operates within cofactor biosynthesis; thiamine diphosphate biosynthesis. Functionally, catalyzes the synthesis of the hydroxymethylpyrimidine phosphate (HMP-P) moiety of thiamine from aminoimidazole ribotide (AIR) in a radical S-adenosyl-L-methionine (SAM)-dependent reaction. In Corynebacterium diphtheriae (strain ATCC 700971 / NCTC 13129 / Biotype gravis), this protein is Phosphomethylpyrimidine synthase.